We begin with the raw amino-acid sequence, 380 residues long: M-protease (380 aa).

A signal peptide spans 1 to 27 (MKKPLGKIVASTALLISVAFSSSIASA). The propeptide occupies 28–111 (AEEAKEKYLI…IEEDAEVTTM (84 aa)). In terms of domain architecture, Inhibitor I9 spans 34 to 111 (KYLIGFNEQE…IEEDAEVTTM (78 aa)). Gln113 lines the Ca(2+) pocket. The region spanning 116-379 (PWGISRVQAP…SGLVNAEAAT (264 aa)) is the Peptidase S8 domain. Asp143 (charge relay system) is an active-site residue. Asp151 contacts Ca(2+). Catalysis depends on His173, which acts as the Charge relay system. Ca(2+) contacts are provided by Leu184, Asn186, Ile188, Val190, Ala274, Tyr276, Ala279, and Asp302. Residue Ser326 is the Charge relay system of the active site.

Belongs to the peptidase S8 family. In terms of assembly, monomer. Requires Ca(2+) as cofactor.

The protein localises to the secreted. Its activity is regulated as follows. Activity is inhibited by phenylmethylsulfonyl fluoride and chymostatin. Its function is as follows. Alkaline serine protease that cleaves various substrates, including N-succinyl-Ala-Ala-Pro-Phe-pNA, N-succinyl-Ala-Ala-Pro-MetpNA, oxidized insulin B chain, casein, hemoglobin and scleroproteins, such as keratin, alpha-keratin and elastin. The chain is M-protease (aprE) from Shouchella clausii (strain KSM-K16) (Alkalihalobacillus clausii).